Reading from the N-terminus, the 70-residue chain is ATP synthase subunit c (70 aa).

The next 2 helical transmembrane spans lie at 4 to 24 (IAAA…NGLI) and 45 to 65 (LMFI…VIAF).

The protein belongs to the ATPase C chain family. As to quaternary structure, F-type ATPases have 2 components, F(1) - the catalytic core - and F(0) - the membrane proton channel. F(1) has five subunits: alpha(3), beta(3), gamma(1), delta(1), epsilon(1). F(0) has three main subunits: a(1), b(2) and c(10-14). The alpha and beta chains form an alternating ring which encloses part of the gamma chain. F(1) is attached to F(0) by a central stalk formed by the gamma and epsilon chains, while a peripheral stalk is formed by the delta and b chains.

It is found in the cell membrane. F(1)F(0) ATP synthase produces ATP from ADP in the presence of a proton or sodium gradient. F-type ATPases consist of two structural domains, F(1) containing the extramembraneous catalytic core and F(0) containing the membrane proton channel, linked together by a central stalk and a peripheral stalk. During catalysis, ATP synthesis in the catalytic domain of F(1) is coupled via a rotary mechanism of the central stalk subunits to proton translocation. The chain is ATP synthase subunit c from Bacillus pumilus (strain SAFR-032).